Consider the following 122-residue polypeptide: MNAVTETVDLQAPPSPLIFTDSAAAKVKDLLAEEGNPELKLRVFVQGGGCSGFQYGFTFDEAVNEDDTVLDKNGVQLLVDPMSFQYLVGAEIDYKEDLEGAQFVIRNPNASTTCGCGSSFSV.

Residues Cys-50, Cys-114, and Cys-116 each coordinate iron-sulfur cluster.

Belongs to the HesB/IscA family. As to quaternary structure, homodimer. Requires iron-sulfur cluster as cofactor.

Its function is as follows. Required for insertion of 4Fe-4S clusters. This is Putative iron-sulfur cluster insertion protein ErpA from Bordetella petrii (strain ATCC BAA-461 / DSM 12804 / CCUG 43448).